The following is a 239-amino-acid chain: Uridylate kinase (239 aa).

Residue 13–16 (KLSG) participates in ATP binding. Glycine 55 is a binding site for UMP. The ATP site is built by glycine 56 and arginine 60. UMP is bound by residues aspartate 75 and 136–143 (TGNPFFTT). ATP-binding residues include threonine 163, asparagine 164, tyrosine 169, and aspartate 172.

This sequence belongs to the UMP kinase family. In terms of assembly, homohexamer.

The protein localises to the cytoplasm. It carries out the reaction UMP + ATP = UDP + ADP. Its pathway is pyrimidine metabolism; CTP biosynthesis via de novo pathway; UDP from UMP (UMPK route): step 1/1. With respect to regulation, inhibited by UTP. Functionally, catalyzes the reversible phosphorylation of UMP to UDP. This is Uridylate kinase from Neisseria meningitidis serogroup A / serotype 4A (strain DSM 15465 / Z2491).